We begin with the raw amino-acid sequence, 620 residues long: DNA primase (620 aa).

Residues 38 to 62 (CPFHADQNPSMTVSVAKNIFKCFSC) form a CHC2-type zinc finger. The region spanning 266–350 (LKLYLVEGYF…IVEVVDWNQA (85 aa)) is the Toprim domain. Positions 272, 319, and 321 each coordinate Mg(2+).

This sequence belongs to the DnaG primase family. In terms of assembly, monomer. Interacts with DnaB. It depends on Zn(2+) as a cofactor. The cofactor is Mg(2+).

The catalysed reaction is ssDNA + n NTP = ssDNA/pppN(pN)n-1 hybrid + (n-1) diphosphate.. In terms of biological role, RNA polymerase that catalyzes the synthesis of short RNA molecules used as primers for DNA polymerase during DNA replication. In Mycoplasma pneumoniae (strain ATCC 29342 / M129 / Subtype 1) (Mycoplasmoides pneumoniae), this protein is DNA primase.